We begin with the raw amino-acid sequence, 316 residues long: Large ribosomal subunit protein uL10 (316 aa).

The segment at 282 to 316 is disordered; sequence ASAAKADEPKKEEAKKVEEEEEEEEDGFMGFGMFD. Basic and acidic residues predominate over residues 286–299; that stretch reads KADEPKKEEAKKVE.

It belongs to the universal ribosomal protein uL10 family. P0 forms a pentameric complex by interaction with dimers of P1 and P2. In terms of processing, phosphorylated.

In terms of biological role, ribosomal protein P0 is the functional equivalent of E.coli protein L10. The sequence is that of Large ribosomal subunit protein uL10 (RPLP0) from Plasmodium falciparum (isolate 7G8).